A 76-amino-acid polypeptide reads, in one-letter code: Esculentin-2-ALb (76 aa).

An N-terminal signal peptide occupies residues 1–22 (MFTMKKSLLLLFFLGTISLSLC). The propeptide occupies 23 to 39 (EEERSADEDDGEKGVKR). Cys70 and Cys76 are disulfide-bonded.

Expressed by the skin glands.

Its subcellular location is the secreted. In terms of biological role, antimicrobial peptide with activity against Gram-positive and Gram-negative bacteria and against fungi. Has been tested against S.aureus (MIC=1.25 ug/mL), B.pumilus (MIC=2.5 ug/mL), B.cereus (MIC=7.5 ug/mL), E.coli (MIC=12.5 ug/mL), B.dysenteriae (MIC=7.5 ug/mL), A.cacoaceticus (MIC=12.5 ug/mL), P.aeruginosa (MIC=50.0 ug/mL) and C.albicans (MIC=2.5 ug/mL). Also shows a weak hemolytic activity. The chain is Esculentin-2-ALb from Amolops loloensis (Lolokou Sucker Frog).